A 1136-amino-acid polypeptide reads, in one-letter code: Protein stu-1 (1136 aa).

HEAT repeat units follow at residues 95–133 and 167–205; these read TLPV…ERSV and YVPT…KSDL. Disordered stretches follow at residues 524–554, 567–794, and 821–884; these read KDPH…MGAP, RAMA…QPQI, and TAGQ…LLDS. Positions 595 to 622 are enriched in low complexity; it reads VSSTSQASVASASTASAVPAPTKSAFGA. The segment covering 659–668 has biased composition (pro residues); the sequence is PAEPASPPSK. Polar residues predominate over residues 673–683; sequence TVTSPKTQTLV. A compositionally biased stretch (low complexity) spans 701-716; sequence SSESGIPIPVSGISSP. 2 stretches are compositionally biased toward polar residues: residues 777-793 and 822-833; these read LPTQ…QQPQ and AGQTQPQSTYTS.

The protein belongs to the CLASP family. Interacts with microtubules.

Its subcellular location is the nucleus. The protein resides in the cytoplasm. The protein localises to the cytoskeleton. It is found in the spindle. Microtubule binding protein that promotes the stabilization of dynamic microtubules. Required for mitotic spindle formation. This chain is Protein stu-1 (stu-1), found in Neurospora crassa (strain ATCC 24698 / 74-OR23-1A / CBS 708.71 / DSM 1257 / FGSC 987).